The primary structure comprises 757 residues: MSCCASSAAIMVAEGGQASPASEELWLASRDLGGGLRQTELSVPNAYCGTCIATIEGALRAKPEVERARVNLSSRRVSIVWKEEVGGRRTNPCDFLHAIAERGYQTHLFSPGEEEGDDLLKQLILAVAVSGFAATNIMLLSVSVWSGADAATRDLFHWISALIAGPALIYAGRFFYKSAWNAIRHGRTNMDVPIALAVSLSYGMSLHETIGHGEHAWFDASVTLLFFLLIGRTLDHMMRGRARTAISGLARLSPRGATVVHPDGSREYRAVDEINPGDRLIVAAGERVPVDGRVLSGTSDLDRSVVNGESSPTVVTTGDTVQAGTLNLTGPLTLEATAAARDSFIAEIIGLMEAAEGGRARYRRIADRAARYYSPAVHLLALLTFVGWMLVEGDVRHAMLVAVAVLIITCPCALGLAVPVVQVVAAGRLFQGGVMVKDGSAMERLAEIDTVLLDKTGTLTIGKPRLVNAHEISPGRLATAAAIAVHSRHPIAVAIQNSAGAASPIAGDIREIPGAGIEVKTEDGVYRLGSRDFAVGGSGPDGRQSEAILSLDFRELACFRFEDQPRPASRESIEALGRLGIATGILSGDRAPVVAALASSLGISNWYAELSPREKVQVCAAAAEAGHKALVVGDGINDAPVLRAAHVSMAPATAADVGRQAADFVFMHERLSAVPFAIETSRHAGQLIRQNFALAIGYNVIAVPIAILGYATPLVAAVAMSSSSLVVVFNALRLKRSLAAGRGATPGTLIHSGAVTS.

Over M1 to K121 the chain is Cytoplasmic. In terms of domain architecture, HMA spans R37 to H107. Residues C48 and C51 each contribute to the a metal cation site. A helical membrane pass occupies residues Q122–S143. The Extracellular segment spans residues V144–W158. Residues I159–S178 traverse the membrane as a helical segment. The Cytoplasmic portion of the chain corresponds to A179 to H185. The helical transmembrane segment at G186 to L206 threads the bilayer. The Extracellular segment spans residues H207–F218. Residues D219–R239 form a helical membrane-spanning segment. Topologically, residues G240 to R368 are cytoplasmic. A helical transmembrane segment spans residues A369–V391. At E392 to A398 the chain is on the extracellular side. Residues M399–L416 form a helical membrane-spanning segment. The Cytoplasmic portion of the chain corresponds to A417–I688. The active-site 4-aspartylphosphate intermediate is the D454. Mg(2+)-binding residues include D634 and D638. Residues R689–L708 traverse the membrane as a helical segment. Topologically, residues G709–P713 are extracellular. Residues L714–L732 traverse the membrane as a helical segment. Residues R733–S757 are Cytoplasmic-facing.

It belongs to the cation transport ATPase (P-type) (TC 3.A.3) family. Type IB subfamily.

It localises to the cell membrane. The catalysed reaction is ATP + H2O = ADP + phosphate + H(+). FixI is a pump of a specific cation involved in symbiotic nitrogen fixation. The four proteins FixG, FixH, FixI, and FixS may participate in a membrane-bound complex coupling the FixI cation pump with a redox process catalyzed by FixG. The protein is Nitrogen fixation protein FixI (fixI) of Rhizobium meliloti (strain 1021) (Ensifer meliloti).